A 2104-amino-acid polypeptide reads, in one-letter code: 5'-3' DNA helicase ZGRF1 (2104 aa).

The segment covering 335–345 has biased composition (polar residues); it reads SSPIHSSTVDG. The disordered stretch occupies residues 335–359; it reads SSPIHSSTVDGNDTERKPKAQEDDV. Ser-336 carries the post-translational modification Phosphoserine. The segment covering 347–356 has biased composition (basic and acidic residues); it reads DTERKPKAQE. Ser-793 and Ser-864 each carry phosphoserine. Zn(2+)-binding residues include Cys-1349, His-1351, Cys-1374, and Cys-1382. A GRF-type zinc finger spans residues 1349–1391; it reads CHHSQPAKLVMVKKEGPNKGRLFYTCDGPKADRCKFFKWLEDV. The segment at 2085–2104 is disordered; the sequence is VEEKQKKKSEKEKSKDKSHS.

In terms of assembly, interacts with DNA repair protein RAD51; the interaction promotes RAD51 strand exchange activity. Also interacts with DNA repair proteins EXO1 and BRCA1; the interactions are increased following DNA damage induction.

The protein resides in the nucleus. The enzyme catalyses ATP + H2O = ADP + phosphate + H(+). The catalysed reaction is Couples ATP hydrolysis with the unwinding of duplex DNA at the replication fork by translocating in the 5'-3' direction. This creates two antiparallel DNA single strands (ssDNA). The leading ssDNA polymer is the template for DNA polymerase III holoenzyme which synthesizes a continuous strand.. 5'-3' DNA helicase which is recruited to sites of DNA damage and promotes repair of replication-blocking DNA lesions through stimulation of homologous recombination (HR). Promotes HR by directly stimulating RAD51-mediated strand exchange activity. Not required to load RAD51 at sites of DNA damage but promotes recombinational repair after RAD51 recruitment. Also promotes HR by positively regulating EXO1-mediated DNA end resection of double-strand breaks. Required for recruitment of replication protein RPA2 to DNA damage sites. Promotes the initiation of the G2/M checkpoint but not its maintenance. Catalyzes Holliday junction branch migration and dissociation of D-loops and DNA flaps. In Homo sapiens (Human), this protein is 5'-3' DNA helicase ZGRF1 (ZGRF1).